A 460-amino-acid polypeptide reads, in one-letter code: Ufm1-specific protease 2 (460 aa).

Residues C293, D417, and H419 contribute to the active site.

This sequence belongs to the peptidase C78 family.

The protein resides in the endoplasmic reticulum. It is found in the cytoplasm. The protein localises to the nucleus. Its function is as follows. Thiol-dependent isopeptidase that specifically cleaves UFM1, a ubiquitin-like modifier protein, from conjugated proteins. While it is also able to mediate the processing of UFM1 precursors, a prerequisite for conjugation reactions, UFSP2 mainly acts as a protein deUFMylase that mediates deconjugation of UFM1 from target proteins. The protein is Ufm1-specific protease 2 of Gallus gallus (Chicken).